The sequence spans 312 residues: Fibrinogen-like protein 1 (312 aa).

The first 22 residues, 1-22, serve as a signal peptide directing secretion; it reads MAKMFSFILVTTALVMGRGSSA. A coiled-coil region spans residues 39–60; that stretch reads LLETRVKQQQVKISQLLHEKQV. Residues 74–306 enclose the Fibrinogen C-terminal domain; sequence LGGKRQYADC…SVVMKIRPND (233 aa). Intrachain disulfides connect Cys83–Cys112 and Cys248–Cys261.

In terms of assembly, homodimer. Interacts (via the Fibrinogen C-terminal domain) with LAG3 (via Ig-like domains 1 and 2).

The protein resides in the secreted. Immune suppressive molecule that inhibits antigen-specific T-cell activation by acting as a major ligand of LAG3. Responsible for LAG3 T-cell inhibitory function. Binds LAG3 independently from MHC class II (MHC-II). Secreted by, and promotes growth of, hepatocytes. This Bos taurus (Bovine) protein is Fibrinogen-like protein 1 (FGL1).